Reading from the N-terminus, the 469-residue chain is UDP-N-acetylmuramoylalanine--D-glutamate ligase (469 aa).

121-127 (GTNGKST) contacts ATP.

This sequence belongs to the MurCDEF family.

It localises to the cytoplasm. The enzyme catalyses UDP-N-acetyl-alpha-D-muramoyl-L-alanine + D-glutamate + ATP = UDP-N-acetyl-alpha-D-muramoyl-L-alanyl-D-glutamate + ADP + phosphate + H(+). It participates in cell wall biogenesis; peptidoglycan biosynthesis. Its function is as follows. Cell wall formation. Catalyzes the addition of glutamate to the nucleotide precursor UDP-N-acetylmuramoyl-L-alanine (UMA). The polypeptide is UDP-N-acetylmuramoylalanine--D-glutamate ligase (Rhodopseudomonas palustris (strain ATCC BAA-98 / CGA009)).